A 412-amino-acid chain; its full sequence is Lipoyl synthase, mitochondrial (412 aa).

A mitochondrion-targeting transit peptide spans 1 to 28 (MASIAPSLKRAHAPLRKALTASSTIRAF). [4Fe-4S] cluster is bound by residues C124, C129, C135, C155, C159, C162, and S372. Residues 138–361 (GSDKNAATAT…NKRALDMGFL (224 aa)) enclose the Radical SAM core domain.

Belongs to the radical SAM superfamily. Lipoyl synthase family. [4Fe-4S] cluster is required as a cofactor.

The protein localises to the mitochondrion. It catalyses the reaction [[Fe-S] cluster scaffold protein carrying a second [4Fe-4S](2+) cluster] + N(6)-octanoyl-L-lysyl-[protein] + 2 oxidized [2Fe-2S]-[ferredoxin] + 2 S-adenosyl-L-methionine + 4 H(+) = [[Fe-S] cluster scaffold protein] + N(6)-[(R)-dihydrolipoyl]-L-lysyl-[protein] + 4 Fe(3+) + 2 hydrogen sulfide + 2 5'-deoxyadenosine + 2 L-methionine + 2 reduced [2Fe-2S]-[ferredoxin]. The protein operates within protein modification; protein lipoylation via endogenous pathway; protein N(6)-(lipoyl)lysine from octanoyl-[acyl-carrier-protein]: step 2/2. In terms of biological role, catalyzes the radical-mediated insertion of two sulfur atoms into the C-6 and C-8 positions of the octanoyl moiety bound to the lipoyl domains of lipoate-dependent enzymes, thereby converting the octanoylated domains into lipoylated derivatives. This is Lipoyl synthase, mitochondrial from Fusarium vanettenii (strain ATCC MYA-4622 / CBS 123669 / FGSC 9596 / NRRL 45880 / 77-13-4) (Fusarium solani subsp. pisi).